The chain runs to 323 residues: SPbeta prophage-derived uncharacterized protein YorG (323 aa).

Residues 222-272 (TAENLEKAIIEAVERQEQAEGIVAVTYEEQKQNNASEELDFNSLMDQIKEI) are a coiled coil.

The sequence is that of SPbeta prophage-derived uncharacterized protein YorG (yorG) from Bacillus subtilis (strain 168).